The following is a 492-amino-acid chain: 5-taurinomethyluridine-[tRNA] synthase subunit GTPB3, mitochondrial (492 aa).

A mitochondrion-targeting transit peptide spans 1 to 20 (MWRGLSALVTQAAWAPLRLC). 5,10-methylenetetrahydrofolate is bound by residues R52, E112, and K152. The TrmE-type G domain occupies 249–416 (GANVVVTGPP…LLQALKTELA (168 aa)). GTP-binding positions include 256–263 (GPPNAGKS), 282–286 (GTTRD), 303–306 (DTAG), and 374–377 (NKSD). N259 lines the K(+) pocket. Positions 263 and 284 each coordinate Mg(2+). Residue K492 participates in 5,10-methylenetetrahydrofolate binding.

Belongs to the TRAFAC class TrmE-Era-EngA-EngB-Septin-like GTPase superfamily. TrmE GTPase family. As to quaternary structure, homodimer; forms a dimer in the presence of potassium. Interacts with MTO1; forms the GTPBP3-MTO1 complex composed of homodimers of GTPBP3 and MTO1. K(+) is required as a cofactor. Ubiquitously expressed. Highly expressed in tissues with high metabolic rates including heart, liver and brain. Weakly expressed in skeletal muscle.

Its subcellular location is the mitochondrion. The enzyme catalyses GTP + H2O = GDP + phosphate + H(+). Functionally, GTPase component of the GTPBP3-MTO1 complex that catalyzes the 5-taurinomethyluridine (taum(5)U) modification at the 34th wobble position (U34) of mitochondrial tRNAs (mt-tRNAs), which plays a role in mt-tRNA decoding and mitochondrial translation. Taum(5)U formation on mammalian mt-tRNA requires the presence of both GTPBP3-mediated GTPase activity and MTO1 catalytic activity. This is 5-taurinomethyluridine-[tRNA] synthase subunit GTPB3, mitochondrial from Mus musculus (Mouse).